We begin with the raw amino-acid sequence, 227 residues long: Phosphoglycolate phosphatase (227 aa).

D8 functions as the Nucleophile in the catalytic mechanism. 2 residues coordinate Mg(2+): D8 and D10. K150 lines the substrate pocket. Positions 173 and 177 each coordinate Mg(2+).

The protein belongs to the archaeal SPP-like hydrolase family. Mg(2+) serves as cofactor.

It carries out the reaction 2-phosphoglycolate + H2O = glycolate + phosphate. Its function is as follows. Catalyzes the dephosphorylation of 2-phosphoglycolate. In Sulfolobus acidocaldarius (strain ATCC 33909 / DSM 639 / JCM 8929 / NBRC 15157 / NCIMB 11770), this protein is Phosphoglycolate phosphatase.